Reading from the N-terminus, the 525-residue chain is GMP synthase [glutamine-hydrolyzing] (525 aa).

One can recognise a Glutamine amidotransferase type-1 domain in the interval 9–207 (RILILDFGSQ…VRDICQCEAL (199 aa)). Cys86 functions as the Nucleophile in the catalytic mechanism. Catalysis depends on residues His181 and Glu183. Residues 208–400 (WTPAKIIDDA…LGLPYDMLYR (193 aa)) enclose the GMPS ATP-PPase domain. 235–241 (SGGVDSS) is an ATP binding site.

As to quaternary structure, homodimer.

The catalysed reaction is XMP + L-glutamine + ATP + H2O = GMP + L-glutamate + AMP + diphosphate + 2 H(+). It participates in purine metabolism; GMP biosynthesis; GMP from XMP (L-Gln route): step 1/1. Catalyzes the synthesis of GMP from XMP. This chain is GMP synthase [glutamine-hydrolyzing], found in Citrobacter koseri (strain ATCC BAA-895 / CDC 4225-83 / SGSC4696).